A 181-amino-acid chain; its full sequence is K99 fimbrial protein (181 aa).

The first 22 residues, 1-22 (MKKTLLAIILGGMAFATTNASA), serve as a signal peptide directing secretion. Cys38 and Cys79 are oxidised to a cystine.

The protein belongs to the fimbrial protein family.

The protein resides in the fimbrium. In terms of biological role, fimbriae (also called pili), polar filaments radiating from the surface of the bacterium to a length of 0.5-1.5 micrometers and numbering 100-300 per cell, enable bacteria to colonize the epithelium of specific host organs. FanC is the main component of the K99 fimbriae. In Escherichia coli, this protein is K99 fimbrial protein (fanC).